Reading from the N-terminus, the 523-residue chain is Calcium-dependent protein kinase 1 (523 aa).

Positions methionine 1 to glutamate 36 are disordered. A lipid anchor (N-myristoyl glycine) is attached at glycine 2. A lipid anchor (S-palmitoyl cysteine) is attached at cysteine 3. The Protein kinase domain occupies tyrosine 57 to isoleucine 324. ATP is bound by residues leucine 63–valine 71, lysine 86, and lysine 90. Position 65 is a phosphoserine (serine 65). Residue serine 117 is modified to Phosphoserine. Aspartate 190 acts as the Proton acceptor in catalysis. Residues serine 216 and serine 219 each carry the phosphoserine modification. Threonine 230 is subject to Phosphothreonine. Serine 334 carries the post-translational modification Phosphoserine. Residues asparagine 345–serine 352 carry the J domain autoinhibitory motif motif. The interval asparagine 345–isoleucine 363 is j domain. Residues glutamine 353–isoleucine 363 carry the J domain interacts with the EF-hand domains motif. EF-hand domains follow at residues glutamate 371–phenylalanine 406, asparagine 415–leucine 450, phenylalanine 451–serine 486, and glutamate 487–histidine 520. The Ca(2+) site is built by aspartate 384, asparagine 386, aspartate 388, glutamine 390, glutamate 395, aspartate 428, aspartate 430, asparagine 432, tyrosine 434, glutamate 439, aspartate 464, aspartate 466, serine 468, lysine 470, glutamate 475, aspartate 498, asparagine 500, aspartate 502, methionine 504, and glutamate 509.

This sequence belongs to the protein kinase superfamily. Ser/Thr protein kinase family. CDPK subfamily. As to quaternary structure, monomer. The cofactor is Mg(2+). Myristoylated. Myristoylation and palmitoylation are required for the localization to the parasitophorous vacuole membrane. In terms of processing, palmitoylated. Palmitoylation increases in merozoites in response to low level of extracellular K(+) in the host blood. Myristoylation and palmitoylation are required for the localization to the parasitophorous vacuole membrane. Post-translationally, phosphorylation at Thr-230 may regulate CDPK1 kinase activity. Phosphorylation increases in response to an increase in intracellular Ca(2+) levels. Autophosphorylated in vitro. Autophosphorylation does not affect membrane localization in vitro.

The protein resides in the membrane. Its subcellular location is the cell membrane. It is found in the parasitophorous vacuole membrane. It localises to the cytoplasm. The protein localises to the cell projection. The protein resides in the cilium. Its subcellular location is the flagellum. It is found in the host cell membrane. The enzyme catalyses L-seryl-[protein] + ATP = O-phospho-L-seryl-[protein] + ADP + H(+). The catalysed reaction is L-threonyl-[protein] + ATP = O-phospho-L-threonyl-[protein] + ADP + H(+). Activated by calcium. Upon calcium binding to the EF-hand domains, the C-terminus of the junction domain (J domain) undergoes a conformational change which results in the dissociation of the pseudo-substrate inhibitory motif from the catalytic domain. This, in turn may facilitate the autophosphorylation of the activation loop at Thr-230, which leads to the kinase activation. Its function is as follows. Calcium-dependent protein kinase which acts as a sensor and effector of intracellular Ca(2+) levels probably in part downstream of cGMP-activated PKG kinase. During the liver stage, involved in sporozoite motility and thus in sporozoite invasion of host hepatocytes, probably together with CDPK4 and CDPK5. In the mosquito midgut and during the last stage of male gamete exflagellation, may play a role in the rupture of the host erythrocyte membrane. In the mosquito midgut, required for the differentiation of the zygote into the ookinete by promoting the translational activation of a subset of repressed mRNAs; these mRNAs are kept repressed in the zygote by the DOZI- or CITH-containing mRNP complexes. Dispensable during the asexual blood stage. This is Calcium-dependent protein kinase 1 from Plasmodium berghei (strain Anka).